A 374-amino-acid chain; its full sequence is tRNA (guanine(26)-N(2))-dimethyltransferase (374 aa).

In terms of domain architecture, Trm1 methyltransferase spans 1–367 (MILKEGEVVF…ATLKNVIEAI (367 aa)). 5 residues coordinate S-adenosyl-L-methionine: arginine 34, arginine 66, aspartate 86, aspartate 113, and alanine 114.

This sequence belongs to the class I-like SAM-binding methyltransferase superfamily. Trm1 family.

It catalyses the reaction guanosine(26) in tRNA + 2 S-adenosyl-L-methionine = N(2)-dimethylguanosine(26) in tRNA + 2 S-adenosyl-L-homocysteine + 2 H(+). In terms of biological role, dimethylates a single guanine residue at position 26 of a number of tRNAs using S-adenosyl-L-methionine as donor of the methyl groups. The sequence is that of tRNA (guanine(26)-N(2))-dimethyltransferase from Methanocaldococcus jannaschii (strain ATCC 43067 / DSM 2661 / JAL-1 / JCM 10045 / NBRC 100440) (Methanococcus jannaschii).